We begin with the raw amino-acid sequence, 93 residues long: Small ribosomal subunit protein uS19 (93 aa).

It belongs to the universal ribosomal protein uS19 family.

Protein S19 forms a complex with S13 that binds strongly to the 16S ribosomal RNA. The protein is Small ribosomal subunit protein uS19 of Frankia alni (strain DSM 45986 / CECT 9034 / ACN14a).